Reading from the N-terminus, the 190-residue chain is Small ribosomal subunit protein uS5 (190 aa).

In terms of domain architecture, S5 DRBM spans 22-85; it reads FVDKLVHINR…ESAKRNLTRV (64 aa).

Belongs to the universal ribosomal protein uS5 family. In terms of assembly, part of the 30S ribosomal subunit. Contacts proteins S4 and S8.

Its function is as follows. With S4 and S12 plays an important role in translational accuracy. Located at the back of the 30S subunit body where it stabilizes the conformation of the head with respect to the body. This chain is Small ribosomal subunit protein uS5, found in Rhodopseudomonas palustris (strain BisA53).